An 81-amino-acid polypeptide reads, in one-letter code: Tissue- and phase-specific nuclear protein (81 aa).

Expressed in oviduct, where expression levels are higher in uterine sections than in tuba sections. No expression detected in small intestine and liver (at protein level).

It localises to the nucleus. In Podarcis siculus (Italian wall lizard), this protein is Tissue- and phase-specific nuclear protein.